We begin with the raw amino-acid sequence, 348 residues long: Holliday junction branch migration complex subunit RuvB (348 aa).

A disordered region spans residues 1-20 (MKPPARMVSPERRSDDVGDT). The interval 1 to 183 (MKPPARMVSP…FGIPIRLNFY (183 aa)) is large ATPase domain (RuvB-L). Residues L22, R23, G64, K67, T68, T69, 130 to 132 (EDF), R173, Y183, and R220 contribute to the ATP site. Residue T68 coordinates Mg(2+). The small ATPAse domain (RuvB-S) stretch occupies residues 184–254 (TVEELEGIVT…IADHALSALE (71 aa)). Positions 257–348 (AAGLDAMDRR…QIGLFGNDDD (92 aa)) are head domain (RuvB-H). The DNA site is built by R293, R312, and R317.

The protein belongs to the RuvB family. In terms of assembly, homohexamer. Forms an RuvA(8)-RuvB(12)-Holliday junction (HJ) complex. HJ DNA is sandwiched between 2 RuvA tetramers; dsDNA enters through RuvA and exits via RuvB. An RuvB hexamer assembles on each DNA strand where it exits the tetramer. Each RuvB hexamer is contacted by two RuvA subunits (via domain III) on 2 adjacent RuvB subunits; this complex drives branch migration. In the full resolvosome a probable DNA-RuvA(4)-RuvB(12)-RuvC(2) complex forms which resolves the HJ.

It is found in the cytoplasm. The enzyme catalyses ATP + H2O = ADP + phosphate + H(+). The RuvA-RuvB-RuvC complex processes Holliday junction (HJ) DNA during genetic recombination and DNA repair, while the RuvA-RuvB complex plays an important role in the rescue of blocked DNA replication forks via replication fork reversal (RFR). RuvA specifically binds to HJ cruciform DNA, conferring on it an open structure. The RuvB hexamer acts as an ATP-dependent pump, pulling dsDNA into and through the RuvAB complex. RuvB forms 2 homohexamers on either side of HJ DNA bound by 1 or 2 RuvA tetramers; 4 subunits per hexamer contact DNA at a time. Coordinated motions by a converter formed by DNA-disengaged RuvB subunits stimulates ATP hydrolysis and nucleotide exchange. Immobilization of the converter enables RuvB to convert the ATP-contained energy into a lever motion, pulling 2 nucleotides of DNA out of the RuvA tetramer per ATP hydrolyzed, thus driving DNA branch migration. The RuvB motors rotate together with the DNA substrate, which together with the progressing nucleotide cycle form the mechanistic basis for DNA recombination by continuous HJ branch migration. Branch migration allows RuvC to scan DNA until it finds its consensus sequence, where it cleaves and resolves cruciform DNA. The polypeptide is Holliday junction branch migration complex subunit RuvB (Bradyrhizobium sp. (strain ORS 278)).